The sequence spans 413 residues: Histidine--tRNA ligase (413 aa).

It belongs to the class-II aminoacyl-tRNA synthetase family. Homodimer.

It is found in the cytoplasm. It catalyses the reaction tRNA(His) + L-histidine + ATP = L-histidyl-tRNA(His) + AMP + diphosphate + H(+). The sequence is that of Histidine--tRNA ligase from Wolbachia sp. subsp. Brugia malayi (strain TRS).